A 357-amino-acid polypeptide reads, in one-letter code: MKIVTIVGARPQFIKLAPVSKEIRRHFEEIIIHTGQHYDFEMDKIFFDELEIPTPNYNLNIGSGSHGFQTGEMLKKIEEILLKEKPDLVLVYGDTNSTIAGALAGSKLNIKIAHVEAGLRSFDRKMPEEINRVLTDHISNILFTPTETADINLKNEGINSGIFNVGDVMYDSLLNALKLIEKKNFKILDELNISKKKYILATVHRAENTDIKENLENIINAFIESNEKIIFPVHPRTRKYLEKYRLFEKIKNYDNLKLISPVGYLEMIYLENNAKKILTDSGGVQKEAYFLKVPCVTLRNNTEWVETVLDGWNILVGSNKEKILENISKFNPASETYNYRFGEGNSSVKIVEVLRNL.

It belongs to the UDP-N-acetylglucosamine 2-epimerase family.

This is UDP-N-acetylglucosamine 2-epimerase homolog from Methanococcus maripaludis (strain DSM 14266 / JCM 13030 / NBRC 101832 / S2 / LL).